Reading from the N-terminus, the 558-residue chain is CTP synthase (558 aa).

The amidoligase domain stretch occupies residues 1 to 266 (MSAKYIFVTG…DRLVMKYLRL (266 aa)). Ser-14 provides a ligand contact to CTP. Ser-14 contacts UTP. ATP is bound by residues 15 to 20 (SLGKGL) and Asp-72. Mg(2+) is bound by residues Asp-72 and Glu-140. Residues 147 to 149 (DIE), 187 to 192 (KTKPTQ), and Lys-223 contribute to the CTP site. Residues 187–192 (KTKPTQ) and Lys-223 each bind UTP. 239-241 (KDV) serves as a coordination point for ATP. Residues 291–537 (IIGIIGKYVE…IGASYEHRMK (247 aa)) form the Glutamine amidotransferase type-1 domain. Position 355 (Gly-355) interacts with L-glutamine. Cys-382 (nucleophile; for glutamine hydrolysis) is an active-site residue. L-glutamine-binding positions include 383 to 386 (LGMQ), Glu-406, and Arg-463. Residues His-510 and Glu-512 contribute to the active site. The segment at 539–558 (THTKEREEESVFLRPERVGK) is disordered. Positions 542 to 558 (KEREEESVFLRPERVGK) are enriched in basic and acidic residues.

The protein belongs to the CTP synthase family. As to quaternary structure, homotetramer.

The enzyme catalyses UTP + L-glutamine + ATP + H2O = CTP + L-glutamate + ADP + phosphate + 2 H(+). It catalyses the reaction L-glutamine + H2O = L-glutamate + NH4(+). The catalysed reaction is UTP + NH4(+) + ATP = CTP + ADP + phosphate + 2 H(+). Its pathway is pyrimidine metabolism; CTP biosynthesis via de novo pathway; CTP from UDP: step 2/2. Allosterically activated by GTP, when glutamine is the substrate; GTP has no effect on the reaction when ammonia is the substrate. The allosteric effector GTP functions by stabilizing the protein conformation that binds the tetrahedral intermediate(s) formed during glutamine hydrolysis. Inhibited by the product CTP, via allosteric rather than competitive inhibition. Its function is as follows. Catalyzes the ATP-dependent amination of UTP to CTP with either L-glutamine or ammonia as the source of nitrogen. Regulates intracellular CTP levels through interactions with the four ribonucleotide triphosphates. The polypeptide is CTP synthase (Koribacter versatilis (strain Ellin345)).